We begin with the raw amino-acid sequence, 400 residues long: Casein kinase I homolog hhp2 (400 aa).

The region spanning 12 to 278 (YRIGRKIGSG…YLRKLFRDLL (267 aa)) is the Protein kinase domain. ATP contacts are provided by residues 18–26 (IGSGSFGQI) and lysine 41. Catalysis depends on aspartate 131, which acts as the Proton acceptor. The disordered stretch occupies residues 330 to 352 (PNYSSIPLPAERNPKTPQSFSTN).

The protein belongs to the protein kinase superfamily. CK1 Ser/Thr protein kinase family. Casein kinase I subfamily.

Its subcellular location is the nucleus. It carries out the reaction L-seryl-[protein] + ATP = O-phospho-L-seryl-[protein] + ADP + H(+). The catalysed reaction is L-threonyl-[protein] + ATP = O-phospho-L-threonyl-[protein] + ADP + H(+). Involved in DNA repair. May regulate the activity of protein(s) involved in double strand break repair caused by gamma rays. This chain is Casein kinase I homolog hhp2 (hhp2), found in Schizosaccharomyces pombe (strain 972 / ATCC 24843) (Fission yeast).